Here is a 113-residue protein sequence, read N- to C-terminus: Dolichyl-diphosphooligosaccharide--protein glycosyltransferase subunit dad-1 (113 aa).

At 1–32 (MAAQVVPVLSKLFDDYQKTTSSKLKIIDAYMT) the chain is on the cytoplasmic side. A helical membrane pass occupies residues 33 to 53 (YILFTGIFQFIYCLLVGTFPF). Topologically, residues 54–55 (NS) are lumenal. The helical transmembrane segment at 56 to 78 (FLSGFISTVTSFVLASCLRMQVN) threads the bilayer. At 79–92 (QENRSEFTAVSTER) the chain is on the cytoplasmic side. The chain crosses the membrane as a helical span at residues 93–113 (AFADFIFANLILHLVVVNFLG).

It belongs to the DAD/OST2 family. As to quaternary structure, component of the oligosaccharyltransferase (OST) complex.

It localises to the endoplasmic reticulum membrane. The protein operates within protein modification; protein glycosylation. Functionally, subunit of the oligosaccharyl transferase (OST) complex that catalyzes the initial transfer of a defined glycan (Glc(3)Man(9)GlcNAc(2) in eukaryotes) from the lipid carrier dolichol-pyrophosphate to an asparagine residue within an Asn-X-Ser/Thr consensus motif in nascent polypeptide chains, the first step in protein N-glycosylation. N-glycosylation occurs cotranslationally and the complex associates with the Sec61 complex at the channel-forming translocon complex that mediates protein translocation across the endoplasmic reticulum (ER). All subunits are required for a maximal enzyme activity. Possesses cell death-inhibiting activity. Suppresses some programmed cell death in C.elegans. This Caenorhabditis elegans protein is Dolichyl-diphosphooligosaccharide--protein glycosyltransferase subunit dad-1.